Reading from the N-terminus, the 617-residue chain is Translation initiation factor IF-2 (617 aa).

A compositionally biased stretch (basic residues) spans 1-11 (MSKHKPRHFQK). The disordered stretch occupies residues 1–25 (MSKHKPRHFQKNKFDNRAKTSAKQQ). Positions 119 to 288 (PRPPIVTIMG…ILLVAEVEDY (170 aa)) constitute a tr-type G domain. A G1 region spans residues 128-135 (GHVDHGKT). 128-135 (GHVDHGKT) serves as a coordination point for GTP. Positions 153 to 157 (GITQK) are G2. The segment at 175 to 178 (DTPG) is G3. GTP is bound by residues 175–179 (DTPGH) and 229–232 (NKMD). A G4 region spans residues 229 to 232 (NKMD). Positions 265–267 (SAL) are G5.

It belongs to the TRAFAC class translation factor GTPase superfamily. Classic translation factor GTPase family. IF-2 subfamily.

It is found in the cytoplasm. One of the essential components for the initiation of protein synthesis. Protects formylmethionyl-tRNA from spontaneous hydrolysis and promotes its binding to the 30S ribosomal subunits. Also involved in the hydrolysis of GTP during the formation of the 70S ribosomal complex. The protein is Translation initiation factor IF-2 (infB) of Mycoplasma pneumoniae (strain ATCC 29342 / M129 / Subtype 1) (Mycoplasmoides pneumoniae).